We begin with the raw amino-acid sequence, 227 residues long: Lectin (227 aa).

Positions 1 to 28 (MTMTSTTTKAMAMAAAVLAAAAVAATNA) are cleaved as a signal peptide. Position 29 is a pyrrolidone carboxylic acid (glutamine 29). Chitin-binding type-1 domains follow at residues 29–70 (QTCG…ACCS), 71–113 (SQRC…PCRA), 114–156 (DIKC…ACCP), and 157–199 (EKRC…GCYK). Intrachain disulfides connect cysteine 31-cysteine 46, cysteine 40-cysteine 52, cysteine 45-cysteine 59, cysteine 63-cysteine 68, cysteine 74-cysteine 89, cysteine 83-cysteine 95, cysteine 88-cysteine 102, cysteine 106-cysteine 111, cysteine 117-cysteine 132, cysteine 126-cysteine 138, cysteine 131-cysteine 145, cysteine 149-cysteine 154, cysteine 160-cysteine 175, cysteine 169-cysteine 181, cysteine 174-cysteine 188, and cysteine 192-cysteine 197. Substrate is bound at residue 38–40 (MIC). A substrate-binding site is contributed by 90 to 101 (SQYGYCGFGSEY). Residue 142–143 (SE) coordinates substrate. Residues 202 to 227 (DGMAAILANNQSVSFEGIIESVAELV) constitute a propeptide that is removed on maturation. An N-linked (GlcNAc...) asparagine glycan is attached at asparagine 211.

N-acetyl-D-glucosamine binding lectin. The chain is Lectin from Oryza sativa subsp. indica (Rice).